We begin with the raw amino-acid sequence, 935 residues long: 2-oxoglutarate dehydrogenase E1 component (935 aa).

It belongs to the alpha-ketoglutarate dehydrogenase family. As to quaternary structure, homodimer. Part of the 2-oxoglutarate dehydrogenase (OGDH) complex composed of E1 (2-oxoglutarate dehydrogenase), E2 (dihydrolipoamide succinyltransferase) and E3 (dihydrolipoamide dehydrogenase); the complex contains multiple copies of the three enzymatic components (E1, E2 and E3). Requires thiamine diphosphate as cofactor.

The catalysed reaction is N(6)-[(R)-lipoyl]-L-lysyl-[protein] + 2-oxoglutarate + H(+) = N(6)-[(R)-S(8)-succinyldihydrolipoyl]-L-lysyl-[protein] + CO2. Its function is as follows. E1 component of the 2-oxoglutarate dehydrogenase (OGDH) complex which catalyzes the decarboxylation of 2-oxoglutarate, the first step in the conversion of 2-oxoglutarate to succinyl-CoA and CO(2). The polypeptide is 2-oxoglutarate dehydrogenase E1 component (sucA) (Haemophilus influenzae (strain ATCC 51907 / DSM 11121 / KW20 / Rd)).